Consider the following 150-residue polypeptide: Transcriptional regulator MraZ (150 aa).

2 consecutive SpoVT-AbrB domains span residues 9-54 (QSIH…PPEE) and 83-126 (AEEC…NKST).

Belongs to the MraZ family. Forms oligomers.

It is found in the cytoplasm. The protein localises to the nucleoid. This Syntrophobacter fumaroxidans (strain DSM 10017 / MPOB) protein is Transcriptional regulator MraZ.